Consider the following 295-residue polypeptide: Tyrosine recombinase XerC (295 aa).

Positions 1–85 (MQTYLQKYWN…ALRQFLAFLV (85 aa)) constitute a Core-binding (CB) domain. The region spanning 106–285 (HLPKNINAEQ…NFQHLAEVYD (180 aa)) is the Tyr recombinase domain. Residues R145, K169, H237, R240, and H263 contribute to the active site. Y272 functions as the O-(3'-phospho-DNA)-tyrosine intermediate in the catalytic mechanism.

This sequence belongs to the 'phage' integrase family. XerC subfamily. As to quaternary structure, forms a cyclic heterotetrameric complex composed of two molecules of XerC and two molecules of XerD.

The protein resides in the cytoplasm. Its function is as follows. Site-specific tyrosine recombinase, which acts by catalyzing the cutting and rejoining of the recombining DNA molecules. The XerC-XerD complex is essential to convert dimers of the bacterial chromosome into monomers to permit their segregation at cell division. It also contributes to the segregational stability of plasmids. This Mannheimia succiniciproducens (strain KCTC 0769BP / MBEL55E) protein is Tyrosine recombinase XerC.